We begin with the raw amino-acid sequence, 174 residues long: Protein-lysine myristoyltransferase HlyC (174 aa).

Residues H23 and D92 contribute to the active site. Position 151 (H151) interacts with heme.

The protein belongs to the RTX toxin acyltransferase family. Monomer. In terms of processing, proteolytically cleaved by the protease systems ClpAP, ClpXP and FtsH, leading to its degradation.

Its subcellular location is the cytoplasm. It catalyses the reaction tetradecanoyl-[ACP] + L-lysyl-[protein] = N(6)-tetradecanoyl-L-lysyl-[protein] + holo-[ACP] + H(+). The acyltransferase activity is inhibited by heme. In terms of biological role, protein-lysine myristoyltransferase that catalyzes myristoylation of the protoxin (HlyA) at two internal lysine residues, thereby converting it to the active toxin. This chain is Protein-lysine myristoyltransferase HlyC, found in Escherichia coli.